A 413-amino-acid chain; its full sequence is Hibernation-specific plasma protein HP-55 (413 aa).

The first 24 residues, 1-24 (MPSSISWGLLLLAALSCLGPGSLA), serve as a signal peptide directing secretion. Gln-25 carries the pyrrolidone carboxylic acid modification. Residues Asn-65, Asn-102, Asn-165, and Asn-266 are each glycosylated (N-linked (GlcNAc...) asparagine). The RCL stretch occupies residues 368 to 387 (GGTVLGAEAMLQAPIMKFDR).

The protein belongs to the serpin family. In terms of assembly, plasma proteins HP-20, HP-25, HP-27 and HP-55 form a 140 kDa complex via disulfide bonds in the plasma. The N-terminus is blocked. Plasma; synthesized in the liver.

The protein localises to the secreted. Functionally, protease inhibitor. The chain is Hibernation-specific plasma protein HP-55 from Tamias sibiricus (Siberian chipmunk).